Reading from the N-terminus, the 511-residue chain is UDP-N-acetylmuramoyl-L-alanyl-D-glutamate--2,6-diaminopimelate ligase (511 aa).

A UDP-N-acetyl-alpha-D-muramoyl-L-alanyl-D-glutamate-binding site is contributed by Ser33. 118–124 (GTNGKTT) is a binding site for ATP. UDP-N-acetyl-alpha-D-muramoyl-L-alanyl-D-glutamate contacts are provided by residues 160–161 (TT), Ser187, Gln193, and Arg195. An N6-carboxylysine modification is found at Lys227. Residues Arg403, 427–430 (DNPR), Gly478, and Glu482 contribute to the meso-2,6-diaminopimelate site. The Meso-diaminopimelate recognition motif signature appears at 427–430 (DNPR).

Belongs to the MurCDEF family. MurE subfamily. The cofactor is Mg(2+). In terms of processing, carboxylation is probably crucial for Mg(2+) binding and, consequently, for the gamma-phosphate positioning of ATP.

It localises to the cytoplasm. It catalyses the reaction UDP-N-acetyl-alpha-D-muramoyl-L-alanyl-D-glutamate + meso-2,6-diaminopimelate + ATP = UDP-N-acetyl-alpha-D-muramoyl-L-alanyl-gamma-D-glutamyl-meso-2,6-diaminopimelate + ADP + phosphate + H(+). Its pathway is cell wall biogenesis; peptidoglycan biosynthesis. Catalyzes the addition of meso-diaminopimelic acid to the nucleotide precursor UDP-N-acetylmuramoyl-L-alanyl-D-glutamate (UMAG) in the biosynthesis of bacterial cell-wall peptidoglycan. The chain is UDP-N-acetylmuramoyl-L-alanyl-D-glutamate--2,6-diaminopimelate ligase from Prochlorococcus marinus subsp. pastoris (strain CCMP1986 / NIES-2087 / MED4).